The primary structure comprises 235 residues: C-type lectin domain family 2 member D-related protein (235 aa).

A disordered region spans residues Met1–Thr50. Topologically, residues Met1–Lys75 are cytoplasmic. Low complexity predominate over residues Ser30–Thr50. The helical; Signal-anchor for type II membrane protein transmembrane segment at Leu76–Ala96 threads the bilayer. Residues Leu97–Pro235 are Extracellular-facing. One can recognise a C-type lectin domain in the interval Phe121–Ser232. The N-linked (GlcNAc...) asparagine glycan is linked to Asn134.

It is found in the cell membrane. Lectin-type cell surface receptor. The sequence is that of C-type lectin domain family 2 member D-related protein from Rattus norvegicus (Rat).